The following is a 70-amino-acid chain: Small ribosomal subunit protein bS18 (70 aa).

This sequence belongs to the bacterial ribosomal protein bS18 family. Part of the 30S ribosomal subunit. Forms a tight heterodimer with protein bS6.

In terms of biological role, binds as a heterodimer with protein bS6 to the central domain of the 16S rRNA, where it helps stabilize the platform of the 30S subunit. This chain is Small ribosomal subunit protein bS18, found in Salinibacter ruber (strain DSM 13855 / M31).